The primary structure comprises 288 residues: Quinate/shikimate dehydrogenase (288 aa).

Substrate is bound by residues Lys-71 and Asp-107. NAD(+) contacts are provided by residues Ala-132 to Ala-135, Asn-155 to Asp-158, Lys-205, Cys-232 to Asn-235, and Gly-255.

The protein belongs to the shikimate dehydrogenase family. In terms of assembly, homodimer.

It catalyses the reaction L-quinate + NAD(+) = 3-dehydroquinate + NADH + H(+). The enzyme catalyses L-quinate + NADP(+) = 3-dehydroquinate + NADPH + H(+). The catalysed reaction is shikimate + NADP(+) = 3-dehydroshikimate + NADPH + H(+). It carries out the reaction shikimate + NAD(+) = 3-dehydroshikimate + NADH + H(+). It functions in the pathway metabolic intermediate biosynthesis; chorismate biosynthesis; chorismate from D-erythrose 4-phosphate and phosphoenolpyruvate: step 4/7. Functionally, the actual biological function of YdiB remains unclear, nor is it known whether 3-dehydroshikimate or quinate represents the natural substrate. Catalyzes the reversible NAD-dependent reduction of both 3-dehydroshikimate (DHSA) and 3-dehydroquinate to yield shikimate (SA) and quinate, respectively. It can use both NAD or NADP for catalysis, however it has higher catalytic efficiency with NAD. This is Quinate/shikimate dehydrogenase from Escherichia coli (strain SMS-3-5 / SECEC).